A 348-amino-acid polypeptide reads, in one-letter code: NADH-ubiquinone oxidoreductase chain 2 (348 aa).

The next 11 helical transmembrane spans lie at 3–23, 25–45, 60–80, 99–119, 122–142, 150–170, 178–196, 200–219, 246–266, 274–294, and 328–348; these read PYVL…TFAS, HWLL…RLMA, FLTQ…NAWA, MMAL…PEVL, LDLT…FALI, NPML…WGGL, ILAY…ILQY, LTLI…FLSL, LTLL…KWLI, DLPA…YFYL, and LMMI…ALFF.

The protein belongs to the complex I subunit 2 family.

It localises to the mitochondrion inner membrane. It catalyses the reaction a ubiquinone + NADH + 5 H(+)(in) = a ubiquinol + NAD(+) + 4 H(+)(out). In terms of biological role, core subunit of the mitochondrial membrane respiratory chain NADH dehydrogenase (Complex I) that is believed to belong to the minimal assembly required for catalysis. Complex I functions in the transfer of electrons from NADH to the respiratory chain. The immediate electron acceptor for the enzyme is believed to be ubiquinone. The chain is NADH-ubiquinone oxidoreductase chain 2 (MT-ND2) from Formosania lacustris (Oriental stream loach).